The following is an 834-amino-acid chain: Striatin-interacting protein 2 (834 aa).

Positions 1-48 are disordered; that stretch reads MEDPAAPGTGGPPANGNGNGGGKGKQAAPKGREAFRSQRRESEGSVDC. The segment covering 8-24 has biased composition (gly residues); sequence GTGGPPANGNGNGGGKG. Residues 30-43 are compositionally biased toward basic and acidic residues; it reads KGREAFRSQRRESE. Phosphoserine is present on residues Ser-318, Ser-329, and Ser-354. The interval 321-345 is disordered; that stretch reads SYTLDLGESQLAPPPSKLRGRRGSR. The segment at 360-382 is disordered; that stretch reads ERDLFKTEEPATEEEEESAGDGE. Residues 369 to 379 are compositionally biased toward acidic residues; the sequence is PATEEEEESAG.

Belongs to the STRIP family. As to quaternary structure, part of the core of STRIPAK complexes composed of PP2A catalytic and scaffolding subunits, the striatins (PP2A regulatory subunits), the striatin-associated proteins MOB4, STRIP1 and STRIP2, PDCD10 and members of the STE20 kinases, such as STK24 and STK26. Interacts with CTTNBP2NL.

Its subcellular location is the cytoplasm. Its function is as follows. Plays a role in the regulation of cell morphology and cytoskeletal organization. Required in the control of cell shape. Calmodulin-binding scaffolding protein which is the center of the striatin-interacting phosphatase and kinase (STRIPAK) complexes. STRIPAK complexes have critical roles in protein (de)phosphorylation and are regulators of multiple signaling pathways including Hippo, MAPK, nuclear receptor and cytoskeleton remodeling. Different types of STRIPAK complexes are involved in a variety of biological processes such as cell growth, differentiation, apoptosis, metabolism and immune regulation. This Homo sapiens (Human) protein is Striatin-interacting protein 2.